The sequence spans 55 residues: Large ribosomal subunit protein bL33B (55 aa).

The protein belongs to the bacterial ribosomal protein bL33 family.

The sequence is that of Large ribosomal subunit protein bL33B from Kineococcus radiotolerans (strain ATCC BAA-149 / DSM 14245 / SRS30216).